Reading from the N-terminus, the 418-residue chain is Vacuole membrane protein HFL1 (418 aa).

Residues 1-5 (MENKL) lie on the Extracellular side of the membrane. The helical transmembrane segment at 6-26 (LCWWLYWPCVYSSIIATIISF) threads the bilayer. At 27–43 (YTITRHLLNYRKPYEQR) the chain is on the cytoplasmic side. A helical membrane pass occupies residues 44-64 (LSIRILLLVPIFSVSCASGII). The Extracellular segment spans residues 65–78 (KPEAAQFYVDPIRE). Residues 79 to 99 (FYEAFVIYTFFTFLTLLLGGE) form a helical membrane-spanning segment. Topologically, residues 100 to 141 (RNIITVLSLNHAPTRHPIPLIGKICKPIDLSDPFDFLFVKKG) are cytoplasmic. A helical membrane pass occupies residues 142-162 (ILQYVWFKPFYCFGTLICSAW). The Extracellular portion of the chain corresponds to 163 to 168 (KLPKFE). A helical membrane pass occupies residues 169–189 (IFLNVFYNISVTWSLYSLALF). Over 190-205 (WKCLYPELTPYKPWLK) the chain is Cytoplasmic. A helical transmembrane segment spans residues 206–226 (FLCVKLIIFASYWQSIIIQGL). Residues 227 to 246 (VVTGKLGTGNQDRTSGYVYK) are Extracellular-facing. Residues 247 to 267 (NGLLCIEMVPFAILHAVAFPW) traverse the membrane as a helical segment. Residues 268 to 418 (NKYTAFSIPY…DVQSRSSMAC (151 aa)) are Cytoplasmic-facing. The ATG8-interacting region stretch occupies residues 379–402 (RTFPEDPNYPVVHDYTMGHRYSRS).

The protein belongs to the TMEM184 family. Interacts with ATG8.

The protein localises to the vacuole membrane. Its function is as follows. Vacuole membrane protein that recruits ATG8 to facilitate the degradation of vacuolar integral membrane proteins during early-stationary vacuole turnover (EVT) when cells enter stationary phase. The sequence is that of Vacuole membrane protein HFL1 from Saccharomyces cerevisiae (strain ATCC 204508 / S288c) (Baker's yeast).